We begin with the raw amino-acid sequence, 238 residues long: Uridylate kinase (238 aa).

An ATP-binding site is contributed by 12-15 (KLSG). Gly-54 contributes to the UMP binding site. ATP-binding residues include Gly-55 and Arg-59. Residues Asp-74 and 135-142 (TGNPYFTT) contribute to the UMP site. ATP-binding residues include Thr-162, Asn-163, Tyr-168, and Asp-171.

Belongs to the UMP kinase family. In terms of assembly, homohexamer.

It localises to the cytoplasm. It carries out the reaction UMP + ATP = UDP + ADP. It functions in the pathway pyrimidine metabolism; CTP biosynthesis via de novo pathway; UDP from UMP (UMPK route): step 1/1. Its activity is regulated as follows. Inhibited by UTP. In terms of biological role, catalyzes the reversible phosphorylation of UMP to UDP. The polypeptide is Uridylate kinase (Rhodopseudomonas palustris (strain ATCC BAA-98 / CGA009)).